Consider the following 265-residue polypeptide: Mlc titration factor A (265 aa).

Zn(2+)-binding residues include His111, His148, His152, and Glu211.

This sequence belongs to the MtfA family. As to quaternary structure, interacts with Mlc. The cofactor is Zn(2+).

It is found in the cytoplasm. Involved in the modulation of the activity of the glucose-phosphotransferase system (glucose-PTS). Interacts with the transcriptional repressor Mlc, preventing its interaction with DNA and leading to the modulation of expression of genes regulated by Mlc, including ptsG, which encodes the PTS system glucose-specific EIICB component. In terms of biological role, shows zinc-dependent metallopeptidase activity. The polypeptide is Mlc titration factor A (Escherichia coli (strain 55989 / EAEC)).